A 648-amino-acid polypeptide reads, in one-letter code: Acetyl-coenzyme A synthetase (648 aa).

Residues 191 to 194 (RGGR), Thr310, and Asn334 contribute to the CoA site. ATP contacts are provided by residues 386–388 (GEP), 410–415 (DTWWQT), Asp499, and Arg514. Ser522 contacts CoA. Arg525 is a binding site for ATP. 3 residues coordinate Mg(2+): Val536, His538, and Ile541. Residue Arg583 coordinates CoA. The residue at position 608 (Lys608) is an N6-acetyllysine.

This sequence belongs to the ATP-dependent AMP-binding enzyme family. The cofactor is Mg(2+). Acetylated. Deacetylation by the SIR2-homolog deacetylase activates the enzyme.

The enzyme catalyses acetate + ATP + CoA = acetyl-CoA + AMP + diphosphate. Catalyzes the conversion of acetate into acetyl-CoA (AcCoA), an essential intermediate at the junction of anabolic and catabolic pathways. AcsA undergoes a two-step reaction. In the first half reaction, AcsA combines acetate with ATP to form acetyl-adenylate (AcAMP) intermediate. In the second half reaction, it can then transfer the acetyl group from AcAMP to the sulfhydryl group of CoA, forming the product AcCoA. The chain is Acetyl-coenzyme A synthetase from Aeromonas salmonicida (strain A449).